Here is a 676-residue protein sequence, read N- to C-terminus: tRNA 5-methylaminomethyl-2-thiouridine biosynthesis bifunctional protein MnmC (676 aa).

The tract at residues 1–241 is tRNA (mnm(5)s(2)U34)-methyltransferase; sequence MFTVTPAKIY…KRECLCGIKN (241 aa). Residues 268-676 are FAD-dependent cmnm(5)s(2)U34 oxidoreductase; sequence IGGGIASLFT…RKLLKGTEIK (409 aa).

In the N-terminal section; belongs to the methyltransferase superfamily. tRNA (mnm(5)s(2)U34)-methyltransferase family. The protein in the C-terminal section; belongs to the DAO family. Requires FAD as cofactor.

Its subcellular location is the cytoplasm. The catalysed reaction is 5-aminomethyl-2-thiouridine(34) in tRNA + S-adenosyl-L-methionine = 5-methylaminomethyl-2-thiouridine(34) in tRNA + S-adenosyl-L-homocysteine + H(+). In terms of biological role, catalyzes the last two steps in the biosynthesis of 5-methylaminomethyl-2-thiouridine (mnm(5)s(2)U) at the wobble position (U34) in tRNA. Catalyzes the FAD-dependent demodification of cmnm(5)s(2)U34 to nm(5)s(2)U34, followed by the transfer of a methyl group from S-adenosyl-L-methionine to nm(5)s(2)U34, to form mnm(5)s(2)U34. This is tRNA 5-methylaminomethyl-2-thiouridine biosynthesis bifunctional protein MnmC from Histophilus somni (strain 2336) (Haemophilus somnus).